The following is a 532-amino-acid chain: ATP synthase subunit alpha (532 aa).

171 to 178 (GDRQTGKT) provides a ligand contact to ATP.

The protein belongs to the ATPase alpha/beta chains family. F-type ATPases have 2 components, CF(1) - the catalytic core - and CF(0) - the membrane proton channel. CF(1) has five subunits: alpha(3), beta(3), gamma(1), delta(1), epsilon(1). CF(0) has three main subunits: a(1), b(2) and c(9-12). The alpha and beta chains form an alternating ring which encloses part of the gamma chain. CF(1) is attached to CF(0) by a central stalk formed by the gamma and epsilon chains, while a peripheral stalk is formed by the delta and b chains.

Its subcellular location is the cell membrane. The catalysed reaction is ATP + H2O + 4 H(+)(in) = ADP + phosphate + 5 H(+)(out). Its function is as follows. Produces ATP from ADP in the presence of a proton gradient across the membrane. The alpha chain is a regulatory subunit. The protein is ATP synthase subunit alpha of Amoebophilus asiaticus (strain 5a2).